Reading from the N-terminus, the 196-residue chain is S-norcoclaurine synthase 2 (196 aa).

The N-terminal stretch at 1 to 19 is a signal peptide; that stretch reads MRMEVVLVVFLMFIGTINC. Residue 104-106 coordinates dopamine; the sequence is YRE. The Proton donor role is filled by Lys-118. Asp-137 contributes to the (4-hydroxyphenyl)acetaldehyde binding site.

The protein belongs to the BetVI family.

The enzyme catalyses (4-hydroxyphenyl)acetaldehyde + dopamine = (S)-norcoclaurine + H2O. With respect to regulation, not inhibited by O-phenanthroline or EDTA. Functionally, involved in the biosynthesis of the common precursor of all benzylisoquinoline alkaloids such as morphine, sanguinarine, codeine or berberine. Condenses dopamine and pyruvic acid or 4-hydroxyphenylpyruvate. This Coptis japonica (Japanese goldthread) protein is S-norcoclaurine synthase 2 (PR10A).